The chain runs to 592 residues: Transcription factor MYC3 (592 aa).

A JAZ-interaction domain region spans residues 82 to 141; the sequence is STGDNTVILGWGDGYYKGEEDKEKKKNNTNTAEQEHRKRVIRELNSLISGGIGVSDESND. Disordered stretches follow at residues 261-313, 341-361, 393-422, and 465-508; these read ENDP…VENQ, CGNE…NDEG, EPPE…AERQ, and QQAE…STAS. The segment covering 278–293 has biased composition (low complexity); that stretch reads SPARVNNGNNSNSNSK. The span at 294 to 306 shows a compositional bias: basic and acidic residues; it reads SDSHQISKLEKND. Over residues 352 to 361 the composition is skewed to polar residues; it reads VSKGSNNDEG. Residues 398-407 are compositionally biased toward basic residues; the sequence is KPRKRGRKPA. Basic and acidic residues-rich tracts occupy residues 408 to 422 and 468 to 482; these read NGRE…AERQ and ESDK…DGMS. Residues 411–460 form the bHLH domain; it reads EEPLNHVEAERQRREKLNQRFYSLRAVVPNVSKMDKASLLGDAISYINEL.

Homo- and heterodimer. Interacts with MYB28, MYB29, MYB34, MYB51, MYB76, MYB122, MYC2, MYC4, AFPH2/NINJA and the JAZ repressors TIFY10A/JAZ1, TIFY10B/JAZ2, TIFY6B/JAZ3, TIFY11A/JAZ5, TIFY11B/JAZ6, TIFY5B/JAZ7, TIFY5A/JAZ8, TIFY7/JAZ9, TIFY9/JAZ10, TIFY3A/JAZ11 and TIFY3B/JAZ12. In terms of tissue distribution, constitutively expressed in roots, stems, leaves, flowers, and seedlings.

It is found in the nucleus. In terms of biological role, transcription factor involved in tryptophan, jasmonic acid (JA) and other stress-responsive gene regulation. With MYC2 and MYC4, controls additively subsets of JA-dependent responses. Can form complexes with all known glucosinolate-related MYBs to regulate glucosinolate biosynthesis. Binds to the G-box (5'-CACGTG-3') of promoters. Activates multiple TIFY/JAZ promoters. In Arabidopsis thaliana (Mouse-ear cress), this protein is Transcription factor MYC3 (MYC3).